The following is a 362-amino-acid chain: Aminomethyltransferase (362 aa).

It belongs to the GcvT family. As to quaternary structure, the glycine cleavage system is composed of four proteins: P, T, L and H.

It catalyses the reaction N(6)-[(R)-S(8)-aminomethyldihydrolipoyl]-L-lysyl-[protein] + (6S)-5,6,7,8-tetrahydrofolate = N(6)-[(R)-dihydrolipoyl]-L-lysyl-[protein] + (6R)-5,10-methylene-5,6,7,8-tetrahydrofolate + NH4(+). Its function is as follows. The glycine cleavage system catalyzes the degradation of glycine. The protein is Aminomethyltransferase of Listeria monocytogenes serotype 4b (strain F2365).